Consider the following 298-residue polypeptide: Probable endonuclease 4 (298 aa).

9 residues coordinate Zn(2+): histidine 69, histidine 110, glutamate 145, aspartate 179, histidine 182, histidine 214, aspartate 227, histidine 229, and glutamate 259.

The protein belongs to the AP endonuclease 2 family. The cofactor is Zn(2+).

It carries out the reaction Endonucleolytic cleavage to 5'-phosphooligonucleotide end-products.. Endonuclease IV plays a role in DNA repair. It cleaves phosphodiester bonds at apurinic or apyrimidinic (AP) sites, generating a 3'-hydroxyl group and a 5'-terminal sugar phosphate. The chain is Probable endonuclease 4 from Geobacillus sp. (strain WCH70).